The chain runs to 180 residues: ATP-dependent protease subunit HslV (180 aa).

Threonine 8 is a catalytic residue. Na(+) contacts are provided by serine 165, cysteine 168, and threonine 171.

It belongs to the peptidase T1B family. HslV subfamily. A double ring-shaped homohexamer of HslV is capped on each side by a ring-shaped HslU homohexamer. The assembly of the HslU/HslV complex is dependent on binding of ATP.

Its subcellular location is the cytoplasm. The enzyme catalyses ATP-dependent cleavage of peptide bonds with broad specificity.. Allosterically activated by HslU binding. Its function is as follows. Protease subunit of a proteasome-like degradation complex believed to be a general protein degrading machinery. In Staphylococcus saprophyticus subsp. saprophyticus (strain ATCC 15305 / DSM 20229 / NCIMB 8711 / NCTC 7292 / S-41), this protein is ATP-dependent protease subunit HslV.